A 149-amino-acid polypeptide reads, in one-letter code: D-aminoacyl-tRNA deacylase (149 aa).

The short motif at Gly-137–Pro-138 is the Gly-cisPro motif, important for rejection of L-amino acids element.

Belongs to the DTD family. Homodimer.

It localises to the cytoplasm. It catalyses the reaction glycyl-tRNA(Ala) + H2O = tRNA(Ala) + glycine + H(+). The catalysed reaction is a D-aminoacyl-tRNA + H2O = a tRNA + a D-alpha-amino acid + H(+). In terms of biological role, an aminoacyl-tRNA editing enzyme that deacylates mischarged D-aminoacyl-tRNAs. Also deacylates mischarged glycyl-tRNA(Ala), protecting cells against glycine mischarging by AlaRS. Acts via tRNA-based rather than protein-based catalysis; rejects L-amino acids rather than detecting D-amino acids in the active site. By recycling D-aminoacyl-tRNA to D-amino acids and free tRNA molecules, this enzyme counteracts the toxicity associated with the formation of D-aminoacyl-tRNA entities in vivo and helps enforce protein L-homochirality. The sequence is that of D-aminoacyl-tRNA deacylase from Clostridium botulinum (strain Alaska E43 / Type E3).